The sequence spans 218 residues: Protein U63 (218 aa).

The protein belongs to the herpesviridae UL92 family.

This Homo sapiens (Human) protein is Protein U63 (U63).